The following is a 60-amino-acid chain: Protein YmjC (60 aa).

Residues 40-60 are disordered; the sequence is HKPYPTNKMQTTSGKKVIQDR.

The protein is Protein YmjC (ymjC) of Escherichia coli (strain K12).